The primary structure comprises 361 residues: Probable dual-specificity RNA methyltransferase RlmN (361 aa).

The active-site Proton acceptor is the E91. The Radical SAM core domain maps to 97 to 329 (QHYGLSVCVT…KKKGVNCVVR (233 aa)). A disulfide bond links C104 and C340. [4Fe-4S] cluster-binding residues include C111, C115, and C118. S-adenosyl-L-methionine contacts are provided by residues 163-164 (GE), S195, 218-220 (SLH), and N296. C340 (S-methylcysteine intermediate) is an active-site residue.

Belongs to the radical SAM superfamily. RlmN family. [4Fe-4S] cluster serves as cofactor.

It localises to the cytoplasm. The catalysed reaction is adenosine(2503) in 23S rRNA + 2 reduced [2Fe-2S]-[ferredoxin] + 2 S-adenosyl-L-methionine = 2-methyladenosine(2503) in 23S rRNA + 5'-deoxyadenosine + L-methionine + 2 oxidized [2Fe-2S]-[ferredoxin] + S-adenosyl-L-homocysteine. The enzyme catalyses adenosine(37) in tRNA + 2 reduced [2Fe-2S]-[ferredoxin] + 2 S-adenosyl-L-methionine = 2-methyladenosine(37) in tRNA + 5'-deoxyadenosine + L-methionine + 2 oxidized [2Fe-2S]-[ferredoxin] + S-adenosyl-L-homocysteine. Functionally, specifically methylates position 2 of adenine 2503 in 23S rRNA and position 2 of adenine 37 in tRNAs. The chain is Probable dual-specificity RNA methyltransferase RlmN from Streptococcus pneumoniae serotype 19F (strain G54).